A 388-amino-acid polypeptide reads, in one-letter code: Chorismate synthase (388 aa).

2 residues coordinate NADP(+): Arg39 and Arg45. FMN-binding positions include 130 to 132, 251 to 252, Gly296, 311 to 315, and Arg337; these read RSS, NA, and KPIPT.

This sequence belongs to the chorismate synthase family. As to quaternary structure, homotetramer. FMNH2 is required as a cofactor.

The enzyme catalyses 5-O-(1-carboxyvinyl)-3-phosphoshikimate = chorismate + phosphate. It functions in the pathway metabolic intermediate biosynthesis; chorismate biosynthesis; chorismate from D-erythrose 4-phosphate and phosphoenolpyruvate: step 7/7. In terms of biological role, catalyzes the anti-1,4-elimination of the C-3 phosphate and the C-6 proR hydrogen from 5-enolpyruvylshikimate-3-phosphate (EPSP) to yield chorismate, which is the branch point compound that serves as the starting substrate for the three terminal pathways of aromatic amino acid biosynthesis. This reaction introduces a second double bond into the aromatic ring system. This is Chorismate synthase from Streptococcus suis (strain 98HAH33).